We begin with the raw amino-acid sequence, 229 residues long: Large ribosomal subunit protein uL1 (229 aa).

This sequence belongs to the universal ribosomal protein uL1 family. As to quaternary structure, part of the 50S ribosomal subunit.

In terms of biological role, binds directly to 23S rRNA. The L1 stalk is quite mobile in the ribosome, and is involved in E site tRNA release. Its function is as follows. Protein L1 is also a translational repressor protein, it controls the translation of the L11 operon by binding to its mRNA. This chain is Large ribosomal subunit protein uL1, found in Rhodopseudomonas palustris (strain TIE-1).